A 93-amino-acid chain; its full sequence is MKTLILLSALVLLAFQVQADPIQNTDEETKTEEQPGEEDQAVSVSFGDPEGASLQEESLRDLVCYCRARGCKGRERMNGTCSKGHLLYMLCCR.

A signal peptide spans 1-19 (MKTLILLSALVLLAFQVQA). Positions 20–58 (DPIQNTDEETKTEEQPGEEDQAVSVSFGDPEGASLQEES) are excised as a propeptide. The disordered stretch occupies residues 23 to 54 (QNTDEETKTEEQPGEEDQAVSVSFGDPEGASL). 3 disulfides stabilise this stretch: Cys-64–Cys-92, Cys-66–Cys-81, and Cys-71–Cys-91.

It belongs to the alpha-defensin family.

Its subcellular location is the secreted. In terms of biological role, may have microbicidal activities. This chain is Alpha-defensin 24 (Defa24), found in Mus musculus (Mouse).